Here is a 338-residue protein sequence, read N- to C-terminus: Large ribosomal subunit protein uL3 (338 aa).

The disordered stretch occupies residues 1 to 37; it reads MPQPSRPRKGSMGFSPRKRAESEVPRIRSWASNDGAP.

It belongs to the universal ribosomal protein uL3 family. Part of the 50S ribosomal subunit. Forms a cluster with proteins L14 and L24e.

Its function is as follows. One of the primary rRNA binding proteins, it binds directly near the 3'-end of the 23S rRNA, where it nucleates assembly of the 50S subunit. This is Large ribosomal subunit protein uL3 from Haloquadratum walsbyi (strain DSM 16790 / HBSQ001).